Here is a 457-residue protein sequence, read N- to C-terminus: Aromatic amino acid transport protein AroP (457 aa).

The Cytoplasmic portion of the chain corresponds to 1–20 (MMDSQQHGEQLKRGLKNRHI). The helical transmembrane segment at 21–41 (QLIALGGAIGTGLFLGSASVI) threads the bilayer. Position 42 (Gln42) is a topological domain, periplasmic. The chain crosses the membrane as a helical span at residues 43–63 (SAGPGIILGYAIAGFIAFLIM). At 64–86 (RQLGEMVVEEPVAGSFSHFAYKY) the chain is on the cytoplasmic side. Residues 87-107 (WGGFAGFASGWNYWVLYVLVA) form a helical membrane-spanning segment. Residues 108–117 (MAELTAVGKY) lie on the Periplasmic side of the membrane. Residues 118-138 (IQFWYPEIPTWASAAAFFVII) form a helical membrane-spanning segment. Topologically, residues 139–155 (NAINLTNVKVFGEMEFW) are cytoplasmic. A helical membrane pass occupies residues 156-176 (FAIIKVIAVIAMILFGAWLLF). The Periplasmic segment spans residues 177–201 (SDTAGPQATVRNLWEQGGFLPHGWT). The chain crosses the membrane as a helical span at residues 202–222 (GLVMMMAIIMFSFGGLELVGI). Over 223 to 240 (TAAEADNPEQSIPKATNQ) the chain is Cytoplasmic. Residues 241-261 (VIYRILIFYIGSLAVLLSLLP) traverse the membrane as a helical segment. Residues 262–271 (WTRVTADTSP) are Periplasmic-facing. A helical membrane pass occupies residues 272 to 292 (FVLIFHELGDTFVANALNIVV). The Cytoplasmic portion of the chain corresponds to 293 to 333 (LTAALSVYNSCVYCNSRMLFGLAQQGNAPKALLNVDKRGVP). A helical transmembrane segment spans residues 334–354 (VSSILVSAVVTALCVLLNYLA). Over 355-358 (PESA) the chain is Periplasmic. The chain crosses the membrane as a helical span at residues 359–379 (FGLLMALVVSALVINWAMISL). Topologically, residues 380–400 (AHMMFRRAKQQQGVKTRFPAL) are cytoplasmic. Residues 401 to 421 (FYPFGNVLCLLFMAAVLIIML) traverse the membrane as a helical segment. Residues 422–425 (MTPG) lie on the Periplasmic side of the membrane. A helical transmembrane segment spans residues 426-446 (MAISVWLIPVWLLILGVGYLC). At 447–457 (KEKTAKTVKAH) the chain is on the cytoplasmic side.

The protein belongs to the amino acid-polyamine-organocation (APC) superfamily. Amino acid transporter (AAT) (TC 2.A.3.1) family.

It localises to the cell inner membrane. The enzyme catalyses L-phenylalanine(in) + H(+)(in) = L-phenylalanine(out) + H(+)(out). It catalyses the reaction L-tryptophan(in) + H(+)(in) = L-tryptophan(out) + H(+)(out). It carries out the reaction L-tyrosine(in) + H(+)(in) = L-tyrosine(out) + H(+)(out). Functionally, permease that is involved in the active transport across the cytoplasmic membrane of all three aromatic amino acids, phenylalanine, tyrosine and tryptophan. The sequence is that of Aromatic amino acid transport protein AroP (aroP) from Salmonella typhi.